The chain runs to 146 residues: Hemoglobin subunit beta (146 aa).

N-acetylvaline is present on V1. Residues 2 to 146 (HLTPDEKNAV…VANALAHKYH (145 aa)) enclose the Globin domain. T12 is subject to Phosphothreonine. S44 carries the post-translational modification Phosphoserine. K59 is modified (N6-acetyllysine). Heme b is bound at residue H63. Position 82 is an N6-acetyllysine (K82). H92 provides a ligand contact to heme b. C93 carries the S-nitrosocysteine modification. The residue at position 144 (K144) is an N6-acetyllysine.

The protein belongs to the globin family. Heterotetramer of two alpha chains and two beta chains. Red blood cells.

Functionally, involved in oxygen transport from the lung to the various peripheral tissues. This Piliocolobus badius (Western red colobus) protein is Hemoglobin subunit beta (HBB).